The chain runs to 80 residues: Large ribosomal subunit protein bL31 (80 aa).

Belongs to the bacterial ribosomal protein bL31 family. Type A subfamily. As to quaternary structure, part of the 50S ribosomal subunit.

Its function is as follows. Binds the 23S rRNA. The protein is Large ribosomal subunit protein bL31 of Nostoc punctiforme (strain ATCC 29133 / PCC 73102).